A 323-amino-acid polypeptide reads, in one-letter code: Acetyl-coenzyme A carboxylase carboxyl transferase subunit alpha (323 aa).

Residues 39 to 293 (RLAGKSQQLT…KRSLAESLRQ (255 aa)) enclose the CoA carboxyltransferase C-terminal domain.

This sequence belongs to the AccA family. In terms of assembly, acetyl-CoA carboxylase is a heterohexamer composed of biotin carboxyl carrier protein (AccB), biotin carboxylase (AccC) and two subunits each of ACCase subunit alpha (AccA) and ACCase subunit beta (AccD).

It is found in the cytoplasm. It catalyses the reaction N(6)-carboxybiotinyl-L-lysyl-[protein] + acetyl-CoA = N(6)-biotinyl-L-lysyl-[protein] + malonyl-CoA. It participates in lipid metabolism; malonyl-CoA biosynthesis; malonyl-CoA from acetyl-CoA: step 1/1. Its function is as follows. Component of the acetyl coenzyme A carboxylase (ACC) complex. First, biotin carboxylase catalyzes the carboxylation of biotin on its carrier protein (BCCP) and then the CO(2) group is transferred by the carboxyltransferase to acetyl-CoA to form malonyl-CoA. The chain is Acetyl-coenzyme A carboxylase carboxyl transferase subunit alpha from Cupriavidus necator (strain ATCC 17699 / DSM 428 / KCTC 22496 / NCIMB 10442 / H16 / Stanier 337) (Ralstonia eutropha).